The primary structure comprises 837 residues: Outer membrane usher protein HifC (837 aa).

A signal peptide spans 1 to 26 (MKTKNFPLNKIAFACTLLLANPVAWA). An intrachain disulfide couples cysteine 813 to cysteine 833.

This sequence belongs to the fimbrial export usher family.

The protein resides in the cell outer membrane. Its function is as follows. Essential for piliation. In Haemophilus influenzae, this protein is Outer membrane usher protein HifC (hifC).